The primary structure comprises 544 residues: Chaperonin GroEL (544 aa).

ATP is bound by residues 30–33 (TLGP), Lys51, 87–91 (DGTTT), Gly415, and Asp496.

The protein belongs to the chaperonin (HSP60) family. In terms of assembly, forms a cylinder of 14 subunits composed of two heptameric rings stacked back-to-back. Interacts with the co-chaperonin GroES.

It is found in the cytoplasm. It catalyses the reaction ATP + H2O + a folded polypeptide = ADP + phosphate + an unfolded polypeptide.. Its function is as follows. Together with its co-chaperonin GroES, plays an essential role in assisting protein folding. The GroEL-GroES system forms a nano-cage that allows encapsulation of the non-native substrate proteins and provides a physical environment optimized to promote and accelerate protein folding. This chain is Chaperonin GroEL, found in Granulibacter bethesdensis (strain ATCC BAA-1260 / CGDNIH1).